The primary structure comprises 342 residues: MVSVTRTVFGELPSGGGAVEKFQLRSDQLNVDIISWGCTITALQVKDRQGKASDVVLGFAELEGYLQKQPYFGAVVGRVANRIAKGRFTVDGKEYHLPINREPNSLHGGFRGFDKVLWTPQVLSNGVQFSRVSPDGEEGYPGELKVWVTYTLDGGELVVNYRAQASQTTPVNLTNHSYFNLAGQGSPDIYDHEVTIAADAYLPVDETLIPTGVIAPVEGTAFDLRKPVELGKHLQSYHIHGFDHNFCLKESKEKKFCARVHHAASGRILEVYTTQPGVQFYTGNFLDGTLKGKSGEVYPKHSGFCLETQNWPDAVNQPQFPPILLRPGEEYNHTTWFKFSVA.

S14 is modified (phosphoserine). Beta-D-galactose is bound by residues 81–82 (NR) and H107. Residue S124 is modified to Phosphoserine. H176 (proton donor) is an active-site residue. Beta-D-galactose contacts are provided by residues 176-178 (HSY), D243, Q279, and E307. E307 acts as the Proton acceptor in catalysis.

This sequence belongs to the aldose epimerase family. Monomer.

Its subcellular location is the cytoplasm. The catalysed reaction is alpha-D-galactose = beta-D-galactose. It catalyses the reaction alpha-D-glucose = beta-D-glucose. Its pathway is carbohydrate metabolism; hexose metabolism. It participates in carbohydrate metabolism; galactose metabolism. Its function is as follows. Mutarotase that catalyzes the interconversion of beta-D-galactose and alpha-D-galactose during galactose metabolism. Beta-D-galactose is metabolized in the liver into glucose 1-phosphate, the primary metabolic fuel, by the action of four enzymes that constitute the Leloir pathway: GALM, GALK1 (galactokinase), GALT (galactose-1-phosphate uridylyltransferase) and GALE (UDP-galactose-4'-epimerase). Involved in the maintenance of the equilibrium between the beta- and alpha-anomers of galactose, therefore ensuring a sufficient supply of the alpha-anomer for GALK1. Also active on D-glucose although shows a preference for galactose over glucose. The polypeptide is Galactose mutarotase (Galm) (Rattus norvegicus (Rat)).